The primary structure comprises 657 residues: UvrABC system protein B (657 aa).

One can recognise a Helicase ATP-binding domain in the interval 23–414 (KSIKKGNKYQ…KENIFHQIMR (392 aa)). Residue 36 to 43 (GVTGSGKT) coordinates ATP. A Beta-hairpin motif is present at residues 89-112 (YYDYYQPEAYIPRTDVFIEKDSST). The Helicase C-terminal domain occupies 431–593 (QVEILFDEAK…ITPTSVKRHI (163 aa)). The region spanning 622 to 657 (AKLVKELRKQMLEAAKALEFEKAAAIRDEINKLRDL) is the UVR domain.

The protein belongs to the UvrB family. Forms a heterotetramer with UvrA during the search for lesions. Interacts with UvrC in an incision complex.

It localises to the cytoplasm. Functionally, the UvrABC repair system catalyzes the recognition and processing of DNA lesions. A damage recognition complex composed of 2 UvrA and 2 UvrB subunits scans DNA for abnormalities. Upon binding of the UvrA(2)B(2) complex to a putative damaged site, the DNA wraps around one UvrB monomer. DNA wrap is dependent on ATP binding by UvrB and probably causes local melting of the DNA helix, facilitating insertion of UvrB beta-hairpin between the DNA strands. Then UvrB probes one DNA strand for the presence of a lesion. If a lesion is found the UvrA subunits dissociate and the UvrB-DNA preincision complex is formed. This complex is subsequently bound by UvrC and the second UvrB is released. If no lesion is found, the DNA wraps around the other UvrB subunit that will check the other stand for damage. This is UvrABC system protein B from Campylobacter jejuni subsp. jejuni serotype O:2 (strain ATCC 700819 / NCTC 11168).